The sequence spans 227 residues: 2-C-methyl-D-erythritol 4-phosphate cytidylyltransferase (227 aa).

It belongs to the IspD/TarI cytidylyltransferase family. IspD subfamily.

It catalyses the reaction 2-C-methyl-D-erythritol 4-phosphate + CTP + H(+) = 4-CDP-2-C-methyl-D-erythritol + diphosphate. It participates in isoprenoid biosynthesis; isopentenyl diphosphate biosynthesis via DXP pathway; isopentenyl diphosphate from 1-deoxy-D-xylulose 5-phosphate: step 2/6. Catalyzes the formation of 4-diphosphocytidyl-2-C-methyl-D-erythritol from CTP and 2-C-methyl-D-erythritol 4-phosphate (MEP). This is 2-C-methyl-D-erythritol 4-phosphate cytidylyltransferase from Tolumonas auensis (strain DSM 9187 / NBRC 110442 / TA 4).